Consider the following 99-residue polypeptide: Large ribosomal subunit protein uL23 (99 aa).

The protein belongs to the universal ribosomal protein uL23 family. As to quaternary structure, part of the 50S ribosomal subunit. Contacts protein L29, and trigger factor when it is bound to the ribosome.

In terms of biological role, one of the early assembly proteins it binds 23S rRNA. One of the proteins that surrounds the polypeptide exit tunnel on the outside of the ribosome. Forms the main docking site for trigger factor binding to the ribosome. The polypeptide is Large ribosomal subunit protein uL23 (Psychromonas ingrahamii (strain DSM 17664 / CCUG 51855 / 37)).